Reading from the N-terminus, the 89-residue chain is Bombyxin B-1 (89 aa).

The first 19 residues, 1 to 19 (MKTSVMFMLVIVISLMCSG), serve as a signal peptide directing secretion. Disulfide bonds link Cys-29-Cys-75, Cys-41-Cys-88, and Cys-74-Cys-79. Positions 48–66 (GGAQYAPYFWTRQYLGSRG) are cleaved as a propeptide — c peptide like.

This sequence belongs to the insulin family. In terms of assembly, heterodimer of a B chain and an A chain linked by two disulfide bonds.

It is found in the secreted. Its function is as follows. Brain peptide responsible for activation of prothoracic glands to produce ecdysone in insects. In Bombyx mori (Silk moth), this protein is Bombyxin B-1 (BBXB1).